Consider the following 490-residue polypeptide: Protein nucleotidyltransferase YdiU (490 aa).

Residues Gly92, Gly94, Arg95, Lys114, Asp126, Gly127, Arg177, and Arg184 each coordinate ATP. The active-site Proton acceptor is the Asp256. Mg(2+) is bound by residues Asn257 and Asp266. Asp266 lines the ATP pocket.

The protein belongs to the SELO family. Mg(2+) serves as cofactor. The cofactor is Mn(2+).

It catalyses the reaction L-seryl-[protein] + ATP = 3-O-(5'-adenylyl)-L-seryl-[protein] + diphosphate. It carries out the reaction L-threonyl-[protein] + ATP = 3-O-(5'-adenylyl)-L-threonyl-[protein] + diphosphate. The catalysed reaction is L-tyrosyl-[protein] + ATP = O-(5'-adenylyl)-L-tyrosyl-[protein] + diphosphate. The enzyme catalyses L-histidyl-[protein] + UTP = N(tele)-(5'-uridylyl)-L-histidyl-[protein] + diphosphate. It catalyses the reaction L-seryl-[protein] + UTP = O-(5'-uridylyl)-L-seryl-[protein] + diphosphate. It carries out the reaction L-tyrosyl-[protein] + UTP = O-(5'-uridylyl)-L-tyrosyl-[protein] + diphosphate. Nucleotidyltransferase involved in the post-translational modification of proteins. It can catalyze the addition of adenosine monophosphate (AMP) or uridine monophosphate (UMP) to a protein, resulting in modifications known as AMPylation and UMPylation. The sequence is that of Protein nucleotidyltransferase YdiU from Bordetella avium (strain 197N).